The chain runs to 102 residues: Citrate lyase acyl carrier protein (102 aa).

Serine 14 carries the post-translational modification O-(phosphoribosyl dephospho-coenzyme A)serine.

It belongs to the CitD family. Oligomer with a subunit composition of (alpha,beta,gamma)6.

The protein resides in the cytoplasm. Covalent carrier of the coenzyme of citrate lyase. The polypeptide is Citrate lyase acyl carrier protein (Streptococcus pyogenes serotype M18 (strain MGAS8232)).